The following is a 110-amino-acid chain: MVNWAAVVDDFYQELFKAHPEYQNKFGFKGVALGSLKGNAAYKTQAGKTVDYINAAIGGSADAAGLASRHKGRNVGSAEFHNAKACLAKACSAHGAPDLGHAIDDILSHL.

The 109-residue stretch at 2 to 110 (VNWAAVVDDF…HAIDDILSHL (109 aa)) folds into the Globin domain. His-70 is a binding site for heme.

The protein belongs to the globin family. Homotetramer. Self-associates in the deoxy state. Seems to dissociate upon oxygenation.

Its function is as follows. Acts as an oxygen store capable of sustaining neuronal activity in an anoxic environment for 5 to 30 minutes. This is Neural hemoglobin from Cerebratulus lacteus (Milky ribbon worm).